The following is a 628-amino-acid chain: Biosynthetic arginine decarboxylase (628 aa).

Lys99 carries the N6-(pyridoxal phosphate)lysine modification. Residue 279-289 (VDVGGGLGIDY) participates in substrate binding.

The protein belongs to the Orn/Lys/Arg decarboxylase class-II family. SpeA subfamily. Requires Mg(2+) as cofactor. Pyridoxal 5'-phosphate serves as cofactor.

It carries out the reaction L-arginine + H(+) = agmatine + CO2. In terms of biological role, catalyzes the biosynthesis of agmatine from arginine. This Xylella fastidiosa (strain 9a5c) protein is Biosynthetic arginine decarboxylase.